Reading from the N-terminus, the 252-residue chain is Adenosylcobinamide-GDP ribazoletransferase (252 aa).

Transmembrane regions (helical) follow at residues 4-24 (LFKG…PYVE), 38-58 (PIIG…INYL), 60-80 (ISIV…TGML), 113-133 (FSVI…HSFL), 141-161 (ILMF…ITII), 190-210 (LVCI…LLIV), and 232-252 (VAGF…CLFT).

This sequence belongs to the CobS family. The cofactor is Mg(2+).

Its subcellular location is the cell membrane. It carries out the reaction alpha-ribazole + adenosylcob(III)inamide-GDP = adenosylcob(III)alamin + GMP + H(+). The catalysed reaction is alpha-ribazole 5'-phosphate + adenosylcob(III)inamide-GDP = adenosylcob(III)alamin 5'-phosphate + GMP + H(+). It functions in the pathway cofactor biosynthesis; adenosylcobalamin biosynthesis; adenosylcobalamin from cob(II)yrinate a,c-diamide: step 7/7. Its function is as follows. Joins adenosylcobinamide-GDP and alpha-ribazole to generate adenosylcobalamin (Ado-cobalamin). Also synthesizes adenosylcobalamin 5'-phosphate from adenosylcobinamide-GDP and alpha-ribazole 5'-phosphate. The polypeptide is Adenosylcobinamide-GDP ribazoletransferase (Clostridium botulinum (strain Eklund 17B / Type B)).